The sequence spans 72 residues: MRVSYLSLTLTIVVVIAIIYAPETEAKAWADADAEAGLGFLAKIMGKVGMRMIKKLVPEAAKVAVDQLSQQQ.

The N-terminal stretch at 1–26 is a signal peptide; it reads MRVSYLSLTLTIVVVIAIIYAPETEA. A propeptide spanning residues 27 to 36 is cleaved from the precursor; it reads KAWADADAEA.

It belongs to the formicidae venom precursor-01 superfamily. Expressed by the venom gland.

It localises to the secreted. Functionally, in vivo, this neurotoxin paralyzes about 40% of blowflies (L.caesar) one hour after intrathoracic injection, when tested at high doses (28 nmol/g). The protein is U10-myrmicitoxin-Tb1a of Tetramorium bicarinatum (Tramp ant).